The following is an 856-amino-acid chain: DNA mismatch repair protein MutS (856 aa).

Residue 607–614 (GPNMSGKS) participates in ATP binding.

Belongs to the DNA mismatch repair MutS family.

This protein is involved in the repair of mismatches in DNA. It is possible that it carries out the mismatch recognition step. This protein has a weak ATPase activity. This chain is DNA mismatch repair protein MutS, found in Lactobacillus delbrueckii subsp. bulgaricus (strain ATCC BAA-365 / Lb-18).